Reading from the N-terminus, the 342-residue chain is MNMSTNYSTTNQSYKHLSEAERGEIEAYLSVGLKPAEIARRLGRNRSTITREINRGSITQVKKVNGAKGLLPTLLCRCCSITVIRHAREASYYLKLDSVSDDFMRAFTDAMREKPRVHSVDTFVHTYRLQHVDAVVPSTKTLYNYIHQGLLEIKVIDLPRRVRIRKKFTKRPSTKKHLGKSIEERPEEINNRSRFGDWEIDSVLGGKTIGEPSILTLVERQTRYAVTKKLVEKKAEYVNQAVLECMKLYPIKSITADNGNEFSSLSKIEGLDVYFAHAYSSYERGTNENFNGLLREFIPKGCSLKELNQNLLEDYTKAINERPRRIHGYQSAKKLFELTQTA.

Positions Ile182–Ala342 constitute an Integrase catalytic domain.

This sequence belongs to the transposase IS30 family.

Its function is as follows. Required for the transposition of the insertion element. The polypeptide is Probable transposase for insertion-like sequence element IS1161 (Streptococcus salivarius).